An 858-amino-acid polypeptide reads, in one-letter code: Heat shock protein 105 kDa (858 aa).

Ser-2 carries the N-acetylserine modification. Position 471 is an N6-acetyllysine (Lys-471). Disordered regions lie at residues 500–585 (KVPT…PPEA) and 801–858 (VTQP…MDLD). Residues 504–515 (EEEDGSSLEADM) are compositionally biased toward acidic residues. A phosphoserine mark is found at Ser-509 and Ser-510. A compositionally biased stretch (polar residues) spans 533-549 (QQDNSEAGTQPQVQTDG). At Ser-558 the chain carries Phosphoserine. Thr-562 bears the Phosphothreonine mark. Composition is skewed to basic and acidic residues over residues 564 to 585 (EESKTPDADKANEKKVDQPPEA) and 806 to 815 (PKIESPKLER). Ser-810 carries the post-translational modification Phosphoserine. Position 816 is a phosphothreonine (Thr-816).

This sequence belongs to the heat shock protein 70 family. Interacts with HSPA8/HSC70. Interacts with HSPA1A (via NBD) and HSPA1B (via NBD). Post-translationally, phosphorylation on Ser-509 may be important for regulation of the HSPA8/HSC70 chaperone activity. In terms of tissue distribution, expressed in neurons in the cerebrum and Purkinje cells in the cerebellum (at protein level). Expressed in testis and no expression or only low-level expression in liver, spleen, lung, and kidney (at protein level). Highly expressed in the brain and moderately expressed in lung, heart, thymus, spleen, liver, and small intestine.

The protein resides in the cytoplasm. Its subcellular location is the nucleus. Functionally, acts as a nucleotide-exchange factor (NEF) for chaperone proteins HSPA1A and HSPA1B, promoting the release of ADP from HSPA1A/B thereby triggering client/substrate protein release. Prevents the aggregation of denatured proteins in cells under severe stress, on which the ATP levels decrease markedly. Inhibits HSPA8/HSC70 ATPase and chaperone activities. The protein is Heat shock protein 105 kDa (Hsph1) of Mus musculus (Mouse).